We begin with the raw amino-acid sequence, 260 residues long: Carbonic anhydrase 2 (260 aa).

At S2 the chain carries N-acetylserine. S2 is modified (phosphoserine). One can recognise an Alpha-carbonic anhydrase domain in the interval 3–259; sequence HHWGYGEHNG…LKNRQVRVFP (257 aa). H64 (proton donor/acceptor) is an active-site residue. H94, H96, and H119 together coordinate Zn(2+). 2 positions are modified to phosphoserine: S165 and S172. A substrate-binding site is contributed by 198 to 199; it reads TN.

Belongs to the alpha-carbonic anhydrase family. Interacts with SLC4A4 and SLC26A6. Interaction with SLC4A7 regulates SLC4A7 transporter activity. Zn(2+) serves as cofactor.

It is found in the cytoplasm. The protein resides in the cell membrane. It carries out the reaction hydrogencarbonate + H(+) = CO2 + H2O. The enzyme catalyses urea = cyanamide + H2O. Inhibited by acetazolamide. In terms of biological role, catalyzes the reversible hydration of carbon dioxide. Can also hydrate cyanamide to urea. Involved in the regulation of fluid secretion into the anterior chamber of the eye. Essential for bone resorption and osteoclast differentiation. Contributes to intracellular pH regulation in the duodenal upper villous epithelium during proton-coupled peptide absorption. Stimulates the chloride-bicarbonate exchange activity of SLC26A6. In Ovis aries (Sheep), this protein is Carbonic anhydrase 2 (CA2).